The primary structure comprises 388 residues: Chorismate synthase (388 aa).

NADP(+)-binding residues include Arg-39 and Arg-45. The segment at 95 to 118 (EKNEKSRRVSRPRPGHADLVGGMK) is disordered. FMN is bound by residues 130–132 (RSS), 251–252 (NA), Gly-296, 311–315 (KPIPT), and Arg-337.

The protein belongs to the chorismate synthase family. In terms of assembly, homotetramer. FMNH2 serves as cofactor.

The catalysed reaction is 5-O-(1-carboxyvinyl)-3-phosphoshikimate = chorismate + phosphate. The protein operates within metabolic intermediate biosynthesis; chorismate biosynthesis; chorismate from D-erythrose 4-phosphate and phosphoenolpyruvate: step 7/7. Its function is as follows. Catalyzes the anti-1,4-elimination of the C-3 phosphate and the C-6 proR hydrogen from 5-enolpyruvylshikimate-3-phosphate (EPSP) to yield chorismate, which is the branch point compound that serves as the starting substrate for the three terminal pathways of aromatic amino acid biosynthesis. This reaction introduces a second double bond into the aromatic ring system. The sequence is that of Chorismate synthase from Listeria innocua serovar 6a (strain ATCC BAA-680 / CLIP 11262).